The sequence spans 258 residues: 5'-nucleotidase SurE (258 aa).

Residues Asp-8, Asp-9, Ser-40, and Asn-98 each contribute to the a divalent metal cation site.

This sequence belongs to the SurE nucleotidase family. The cofactor is a divalent metal cation.

It localises to the cytoplasm. It catalyses the reaction a ribonucleoside 5'-phosphate + H2O = a ribonucleoside + phosphate. In terms of biological role, nucleotidase that shows phosphatase activity on nucleoside 5'-monophosphates. This chain is 5'-nucleotidase SurE, found in Synechococcus elongatus (strain ATCC 33912 / PCC 7942 / FACHB-805) (Anacystis nidulans R2).